A 578-amino-acid polypeptide reads, in one-letter code: Polymerase acidic protein (578 aa).

As to quaternary structure, the RNA polymerase is composed of three subunits: PB1, PB2 and PA. Post-translationally, phosphorylated on serines and threonines by host kinases.

Functionally, implicated in endonuclease cleavage of capped RNA primers. Displays an elongation factor activity in viral RNA synthesis. Dispensable for viral transcription, but not replication. The polypeptide is Polymerase acidic protein (Infectious salmon anemia virus (isolate Atlantic salmon/Norway/810/9/99) (ISAV)).